The following is a 1076-amino-acid chain: Protein EXPORTIN 1B (1076 aa).

Residues 37 to 103 (ADNILRDLKA…KNYISDVIVQ (67 aa)) form the Importin N-terminal domain. HEAT repeat units lie at residues 135–171 (AKWK…EVFD), 232–267 (IFES…LNFG), 282–319 (MNQL…FFTS), 475–514 (DTEK…SMVV), 564–601 (KFLK…KCKR), 613–650 (PFVS…AESD), 683–720 (LKEP…IFLD), 757–794 (REIL…DYAR), 799–836 (ARES…CTLE), 895–935 (ETGL…VLTD), and 943–988 (KLHV…YTTK).

This sequence belongs to the exportin family. In terms of tissue distribution, present in mature pollen grains, unpollinated pistils, and 2-week-old seedlings.

The protein localises to the nucleus. It is found in the nuclear pore complex. Its subcellular location is the nucleus membrane. Its function is as follows. Receptor for the leucine-rich nuclear export signal (NES). Binds cooperatively to the NES on its target protein and to the small GTPase Ran in its active GTP-bound form. Required for the maternal-to-embryonic transition and during gametophyte development. This Arabidopsis thaliana (Mouse-ear cress) protein is Protein EXPORTIN 1B.